Here is a 637-residue protein sequence, read N- to C-terminus: tRNA 5-methylaminomethyl-2-thiouridine biosynthesis bifunctional protein MnmC (637 aa).

The interval 1–232 (MPERIEWLED…KRDNLQGEFN (232 aa)) is tRNA (mnm(5)s(2)U34)-methyltransferase. The FAD-dependent cmnm(5)s(2)U34 oxidoreductase stretch occupies residues 255–637 (IGAGLAGAAV…YGEAKLVSED (383 aa)).

This sequence in the N-terminal section; belongs to the methyltransferase superfamily. tRNA (mnm(5)s(2)U34)-methyltransferase family. It in the C-terminal section; belongs to the DAO family. The cofactor is FAD.

The protein localises to the cytoplasm. The enzyme catalyses 5-aminomethyl-2-thiouridine(34) in tRNA + S-adenosyl-L-methionine = 5-methylaminomethyl-2-thiouridine(34) in tRNA + S-adenosyl-L-homocysteine + H(+). Catalyzes the last two steps in the biosynthesis of 5-methylaminomethyl-2-thiouridine (mnm(5)s(2)U) at the wobble position (U34) in tRNA. Catalyzes the FAD-dependent demodification of cmnm(5)s(2)U34 to nm(5)s(2)U34, followed by the transfer of a methyl group from S-adenosyl-L-methionine to nm(5)s(2)U34, to form mnm(5)s(2)U34. The polypeptide is tRNA 5-methylaminomethyl-2-thiouridine biosynthesis bifunctional protein MnmC (Polaromonas sp. (strain JS666 / ATCC BAA-500)).